Consider the following 138-residue polypeptide: Protein NrdI (138 aa).

It belongs to the NrdI family.

Functionally, probably involved in ribonucleotide reductase function. This is Protein NrdI from Paracoccus denitrificans (strain Pd 1222).